Consider the following 54-residue polypeptide: uncharacterized protein (54 aa).

The disordered stretch occupies residues 34 to 54 (NNREKQKSGKLRELRRGFKTF).

This is an uncharacterized protein from Acidianus two-tailed virus (ATV).